We begin with the raw amino-acid sequence, 182 residues long: Nascent polypeptide-associated complex subunit alpha (182 aa).

In terms of domain architecture, NAC-A/B spans 17 to 81 (NKNEKKAKEL…AKVDDMNQRI (65 aa)). The segment at 120–148 (ASLQGGESNADAAEDDNEEVDETGINPKD) is disordered. Residues 131-141 (AAEDDNEEVDE) show a composition bias toward acidic residues. Positions 144-182 (INPKDIDLIVEQTRVSRGSAVKALKKHDGDMVNALMELS) constitute a UBA domain.

It belongs to the NAC-alpha family. As to quaternary structure, part of the nascent polypeptide-associated complex (NAC), consisting of EGD2 and EGD1. NAC associates with ribosomes via EGD1.

It localises to the cytoplasm. The protein resides in the nucleus. Component of the nascent polypeptide-associated complex (NAC), a dynamic component of the ribosomal exit tunnel, protecting the emerging polypeptides from interaction with other cytoplasmic proteins to ensure appropriate nascent protein targeting. The NAC complex also promotes mitochondrial protein import by enhancing productive ribosome interactions with the outer mitochondrial membrane and blocks the inappropriate interaction of ribosomes translating non-secretory nascent polypeptides with translocation sites in the membrane of the endoplasmic reticulum. EGD2 may also be involved in transcription regulation. This is Nascent polypeptide-associated complex subunit alpha (EGD2) from Lodderomyces elongisporus (strain ATCC 11503 / CBS 2605 / JCM 1781 / NBRC 1676 / NRRL YB-4239) (Yeast).